The chain runs to 153 residues: Two-component response regulator ARR17 (153 aa).

Positions 21-149 (HVLAVDDNLI…DVEKLKCHLL (129 aa)) constitute a Response regulatory domain. Position 82 is a 4-aspartylphosphate (D82).

It belongs to the ARR family. Type-A subfamily. Two-component system major event consists of a His-to-Asp phosphorelay between a sensor histidine kinase (HK) and a response regulator (RR). In plants, the His-to-Asp phosphorelay involves an additional intermediate named Histidine-containing phosphotransfer protein (HPt). This multistep phosphorelay consists of a His-Asp-His-Asp sequential transfer of a phosphate group between first a His and an Asp of the HK protein, followed by the transfer to a conserved His of the HPt protein and finally the transfer to an Asp in the receiver domain of the RR protein.

It is found in the nucleus. Its function is as follows. Functions as a response regulator involved in His-to-Asp phosphorelay signal transduction system. Phosphorylation of the Asp residue in the receiver domain activates the ability of the protein to promote the transcription of target genes. Type-A response regulators seem to act as negative regulators of the cytokinin signaling. The polypeptide is Two-component response regulator ARR17 (ARR17) (Arabidopsis thaliana (Mouse-ear cress)).